The sequence spans 145 residues: Methyl-coenzyme M reductase I operon protein D (145 aa).

In terms of assembly, MCR is composed of three subunits: alpha, beta, and gamma. The function of proteins C and D is not known.

This Methanothermobacter thermautotrophicus (strain ATCC 29096 / DSM 1053 / JCM 10044 / NBRC 100330 / Delta H) (Methanobacterium thermoautotrophicum) protein is Methyl-coenzyme M reductase I operon protein D (mcrD).